The chain runs to 292 residues: 2,3-dihydroxybenzoate decarboxylase (292 aa).

The active site involves cysteine 263.

This sequence belongs to the metallo-dependent hydrolases superfamily. As to quaternary structure, homotetramer.

It carries out the reaction 2,3-dihydroxybenzoate + H(+) = catechol + CO2. The protein operates within aromatic compound metabolism; benzoate degradation via hydroxylation. The sequence is that of 2,3-dihydroxybenzoate decarboxylase from Aspergillus niger.